The following is a 302-amino-acid chain: Probable 2-(5''-triphosphoribosyl)-3'-dephosphocoenzyme-A synthase 1 (302 aa).

The protein belongs to the CitG/MdcB family.

The enzyme catalyses 3'-dephospho-CoA + ATP = 2'-(5''-triphospho-alpha-D-ribosyl)-3'-dephospho-CoA + adenine. The sequence is that of Probable 2-(5''-triphosphoribosyl)-3'-dephosphocoenzyme-A synthase 1 from Salmonella typhi.